A 198-amino-acid chain; its full sequence is MASTAIENAEPSDCKADLKIPKIDGDFPLKVLYCGVCSLPTEYCEYMPDVAKCRQWLEKNFPDVFAKLTLGHIPKQETGTVEGQATSGEEEEKKKQKRGGRGQIKQKKKTVPQRITIAKIPRAKKKYVTRVCGLATFEIELKDAQRFFAQKFSCGASVTGEDEIIIQGDFTDDIIDVIQEKWPEVDDDSIEDLGEVKK.

Positions 76–110 are disordered; the sequence is QETGTVEGQATSGEEEEKKKQKRGGRGQIKQKKKT. The span at 77–87 shows a compositional bias: polar residues; sequence ETGTVEGQATS. Over residues 95–110 the composition is skewed to basic residues; that stretch reads KQKRGGRGQIKQKKKT. Residues 115–182 form the SUI1 domain; it reads ITIAKIPRAK…DIIDVIQEKW (68 aa).

Belongs to the DENR family.

Functionally, may be involved in the translation of target mRNAs by scanning and recognition of the initiation codon. Involved in translation initiation; promotes recruitment of aminoacetyled initiator tRNA to P site of 40S ribosomes. Can promote release of deacylated tRNA and mRNA from recycled 40S subunits following ABCE1-mediated dissociation of post-termination ribosomal complexes into subunits. The protein is Density-regulated protein (denr) of Xenopus laevis (African clawed frog).